A 349-amino-acid polypeptide reads, in one-letter code: 11-beta-hydroxysteroid dehydrogenase 1A (349 aa).

A helical; Signal-anchor for type II membrane protein transmembrane segment spans residues 10 to 30; the sequence is LTAPFFTFFGLCFFLPPFYFF. Residues 54–80 and D105 contribute to the NADP(+) site; that span reads GASS…TARR. S184 is a binding site for substrate. The active-site Proton acceptor is the Y197. NADP(+) contacts are provided by residues 197 to 201 and K201; that span reads YNASK.

The protein belongs to the short-chain dehydrogenases/reductases (SDR) family. In terms of tissue distribution, expressed in the above-ground part of seedlings, especially in the vascular tissues. Also detected in the buds and silique pedicels. Highly induced in oil-accumulating tissues of maturing seeds.

It localises to the lipid droplet. It is found in the membrane. It carries out the reaction an 11beta-hydroxysteroid + NADP(+) = an 11-oxosteroid + NADPH + H(+). The catalysed reaction is 17beta-estradiol + NADP(+) = estrone + NADPH + H(+). The enzyme catalyses corticosterone + NADP(+) = 11-dehydrocorticosterone + NADPH + H(+). It catalyses the reaction cortisone + NADPH + H(+) = cortisol + NADP(+). Catalyzes 11-beta, 17-beta-hydroxysteroid and reduces 17-beta-ketosteroids. Involved in regulating plant growth and development, probably promoting or mediating brassinosteroid effects. Plays a role during seed maturation. In Arabidopsis thaliana (Mouse-ear cress), this protein is 11-beta-hydroxysteroid dehydrogenase 1A (HSD1).